Here is a 330-residue protein sequence, read N- to C-terminus: uncharacterized protein (330 aa).

Residues 2 to 22 (IKPIYLIIIGTVICLVILYYF) form a helical membrane-spanning segment. N-linked (GlcNAc...) asparagine; by host glycosylation is found at N72, N94, N234, and N315.

It is found in the membrane. This is an uncharacterized protein from Acanthamoeba polyphaga mimivirus (APMV).